The chain runs to 483 residues: (R)-mandelonitrile beta-glucosyltransferase (483 aa).

The active-site Proton acceptor is the histidine 22. Histidine 22 lines the an anthocyanidin pocket. Residue aspartate 124 is the Charge relay of the active site. UDP-alpha-D-glucose contacts are provided by threonine 146, glutamine 363, histidine 378, tryptophan 381, asparagine 382, serine 383, and glutamate 386. Alanine 401 serves as a coordination point for an anthocyanidin. The UDP-alpha-D-glucose site is built by glutamate 402 and glutamine 403.

Belongs to the UDP-glycosyltransferase family.

The enzyme catalyses (R)-mandelonitrile + UDP-alpha-D-glucose = (R)-prunasin + UDP + H(+). Its function is as follows. Involved in the biosynthesis of the cyanogenic glycoside (R)-prunasin, a precursor of (R)-amygdalin, which at high concentrations is associated with intense bitterness in kernels of almond. Stereo-selectively glucosylates (R)-mandelonitrile to produce (R)-prunasin. This Prunus dulcis (Almond) protein is (R)-mandelonitrile beta-glucosyltransferase.